Reading from the N-terminus, the 322-residue chain is Lipoyl synthase (322 aa).

Positions 1-24 are disordered; that stretch reads MVTVLDTVSKPRPRHPEKAHRPDQ. Positions 14-24 are enriched in basic and acidic residues; sequence RHPEKAHRPDQ. [4Fe-4S] cluster contacts are provided by Cys59, Cys64, Cys70, Cys85, Cys89, Cys92, and Ser298. The region spanning 71–287 is the Radical SAM core domain; it reads WDKKHATFMI…ETIAYTKGFL (217 aa).

Belongs to the radical SAM superfamily. Lipoyl synthase family. The cofactor is [4Fe-4S] cluster.

The protein localises to the cytoplasm. It catalyses the reaction [[Fe-S] cluster scaffold protein carrying a second [4Fe-4S](2+) cluster] + N(6)-octanoyl-L-lysyl-[protein] + 2 oxidized [2Fe-2S]-[ferredoxin] + 2 S-adenosyl-L-methionine + 4 H(+) = [[Fe-S] cluster scaffold protein] + N(6)-[(R)-dihydrolipoyl]-L-lysyl-[protein] + 4 Fe(3+) + 2 hydrogen sulfide + 2 5'-deoxyadenosine + 2 L-methionine + 2 reduced [2Fe-2S]-[ferredoxin]. Its pathway is protein modification; protein lipoylation via endogenous pathway; protein N(6)-(lipoyl)lysine from octanoyl-[acyl-carrier-protein]: step 2/2. Catalyzes the radical-mediated insertion of two sulfur atoms into the C-6 and C-8 positions of the octanoyl moiety bound to the lipoyl domains of lipoate-dependent enzymes, thereby converting the octanoylated domains into lipoylated derivatives. In Chelativorans sp. (strain BNC1), this protein is Lipoyl synthase.